A 432-amino-acid chain; its full sequence is Phosphomethylpyrimidine synthase (432 aa).

Substrate-binding positions include Asn66, Met95, Tyr124, His163, 185–187 (SRG), 226–229 (DGMR), and Glu265. Position 269 (His269) interacts with Zn(2+). Residue Tyr292 participates in substrate binding. Position 333 (His333) interacts with Zn(2+). [4Fe-4S] cluster contacts are provided by Cys409, Cys412, and Cys416.

It belongs to the ThiC family. It depends on [4Fe-4S] cluster as a cofactor.

The catalysed reaction is 5-amino-1-(5-phospho-beta-D-ribosyl)imidazole + S-adenosyl-L-methionine = 4-amino-2-methyl-5-(phosphooxymethyl)pyrimidine + CO + 5'-deoxyadenosine + formate + L-methionine + 3 H(+). Its pathway is cofactor biosynthesis; thiamine diphosphate biosynthesis. Catalyzes the synthesis of the hydroxymethylpyrimidine phosphate (HMP-P) moiety of thiamine from aminoimidazole ribotide (AIR) in a radical S-adenosyl-L-methionine (SAM)-dependent reaction. This is Phosphomethylpyrimidine synthase from Desulforudis audaxviator (strain MP104C).